Consider the following 568-residue polypeptide: Phosphoribosylaminoimidazole carboxylase (568 aa).

The ATP-grasp domain maps to 110 to 298 (KNHLIKHDVA…QFEAHVRAVT (189 aa)). Residue 138 to 193 (GEKFGYPYMLKSRTLAYDGRGNFVVKDKSYCEKALEFLKDRPLYAEKWCPFTKELA) participates in ATP binding.

This sequence in the C-terminal section; belongs to the AIR carboxylase family. Class I subfamily.

It catalyses the reaction 5-amino-1-(5-phospho-D-ribosyl)imidazole-4-carboxylate + H(+) = 5-amino-1-(5-phospho-beta-D-ribosyl)imidazole + CO2. It participates in purine metabolism; IMP biosynthesis via de novo pathway; 5-amino-1-(5-phospho-D-ribosyl)imidazole-4-carboxylate from 5-amino-1-(5-phospho-D-ribosyl)imidazole (carboxylase route): step 1/1. The sequence is that of Phosphoribosylaminoimidazole carboxylase (ADE2) from Candida albicans (strain SC5314 / ATCC MYA-2876) (Yeast).